The following is an 886-amino-acid chain: Alanine--tRNA ligase (886 aa).

H570, H574, C673, and H677 together coordinate Zn(2+).

This sequence belongs to the class-II aminoacyl-tRNA synthetase family. The cofactor is Zn(2+).

It localises to the cytoplasm. It catalyses the reaction tRNA(Ala) + L-alanine + ATP = L-alanyl-tRNA(Ala) + AMP + diphosphate. Catalyzes the attachment of alanine to tRNA(Ala) in a two-step reaction: alanine is first activated by ATP to form Ala-AMP and then transferred to the acceptor end of tRNA(Ala). Also edits incorrectly charged Ser-tRNA(Ala) and Gly-tRNA(Ala) via its editing domain. This Chlorobium chlorochromatii (strain CaD3) protein is Alanine--tRNA ligase.